A 163-amino-acid chain; its full sequence is ATP synthase subunit b 1 (163 aa).

The chain crosses the membrane as a helical span at residues 7 to 27; that stretch reads PETWVAIAFVILMGLFAYLGV.

This sequence belongs to the ATPase B chain family. F-type ATPases have 2 components, F(1) - the catalytic core - and F(0) - the membrane proton channel. F(1) has five subunits: alpha(3), beta(3), gamma(1), delta(1), epsilon(1). F(0) has three main subunits: a(1), b(2) and c(10-14). The alpha and beta chains form an alternating ring which encloses part of the gamma chain. F(1) is attached to F(0) by a central stalk formed by the gamma and epsilon chains, while a peripheral stalk is formed by the delta and b chains.

The protein localises to the cell inner membrane. Its function is as follows. F(1)F(0) ATP synthase produces ATP from ADP in the presence of a proton or sodium gradient. F-type ATPases consist of two structural domains, F(1) containing the extramembraneous catalytic core and F(0) containing the membrane proton channel, linked together by a central stalk and a peripheral stalk. During catalysis, ATP synthesis in the catalytic domain of F(1) is coupled via a rotary mechanism of the central stalk subunits to proton translocation. Functionally, component of the F(0) channel, it forms part of the peripheral stalk, linking F(1) to F(0). In Bradyrhizobium sp. (strain BTAi1 / ATCC BAA-1182), this protein is ATP synthase subunit b 1.